A 346-amino-acid chain; its full sequence is Elongation factor Ts (346 aa).

Positions 80–83 (TDFV) are involved in Mg(2+) ion dislocation from EF-Tu.

It belongs to the EF-Ts family.

Its subcellular location is the cytoplasm. Functionally, associates with the EF-Tu.GDP complex and induces the exchange of GDP to GTP. It remains bound to the aminoacyl-tRNA.EF-Tu.GTP complex up to the GTP hydrolysis stage on the ribosome. The chain is Elongation factor Ts from Streptococcus pyogenes serotype M18 (strain MGAS8232).